Here is a 109-residue protein sequence, read N- to C-terminus: RYamide neuropeptides (109 aa).

The first 22 residues, 1–22 (MNECVNKLLHLKFLFYFILGIQ), serve as a signal peptide directing secretion. Tyr33 carries the tyrosine amide modification. A propeptide spanning residues 36-53 (STTYDESLKSRRIFIVPR) is cleaved from the precursor. Tyr63 carries the post-translational modification Tyrosine amide. The propeptide occupies 67–109 (SGKYLCLSREINKLIVRKRLRNNDKERTPTLSFITKHFLMRNT).

The protein localises to the secreted. Neuropeptides RYamide-1 and RYamide-2 are ligands for the G-protein coupled receptor RYa-R. May suppress feeding behavior. The polypeptide is RYamide neuropeptides (Drosophila melanogaster (Fruit fly)).